Consider the following 640-residue polypeptide: Fructose-1,6-bisphosphatase class 3 (640 aa).

This sequence belongs to the FBPase class 3 family. It depends on Mn(2+) as a cofactor.

It carries out the reaction beta-D-fructose 1,6-bisphosphate + H2O = beta-D-fructose 6-phosphate + phosphate. The protein operates within carbohydrate biosynthesis; gluconeogenesis. In Lactococcus lactis subsp. lactis (strain IL1403) (Streptococcus lactis), this protein is Fructose-1,6-bisphosphatase class 3.